Here is a 148-residue protein sequence, read N- to C-terminus: UPF0756 membrane protein YeaL (148 aa).

Helical transmembrane passes span 14–34, 51–71, 86–106, and 112–132; these read ALGF…LIIV, LSIG…SGTL, LVAI…VTLM, and LVAG…GVPV.

Belongs to the UPF0756 family.

It localises to the cell membrane. This chain is UPF0756 membrane protein YeaL, found in Escherichia coli O157:H7.